We begin with the raw amino-acid sequence, 193 residues long: Large ribosomal subunit protein bL12cy (193 aa).

The N-terminal 59 residues, 1–59 (MAATTLSIATTIRSSSFSSGLASAHHFPSRPLSIEFPFSFGVSSSSTLSHRAIYLHPIS), are a transit peptide targeting the chloroplast. The span at 170-187 (GVTKDEAEEDKTQLEEAG) shows a compositional bias: basic and acidic residues. A disordered region spans residues 170 to 193 (GVTKDEAEEDKTQLEEAGAKVSIV).

The protein belongs to the bacterial ribosomal protein bL12 family.

It is found in the plastid. Its subcellular location is the chloroplast. This is Large ribosomal subunit protein bL12cy (RPL12B) from Arabidopsis thaliana (Mouse-ear cress).